The sequence spans 322 residues: MSELYDITIVGGGPVGLFAAFYAHLRQAKVKIIDSLPQLGGQPAILYPEKKILDVPGFTNLTGEELTQRLIEQLETFQTEICLNETVLDIVKGEEGFTITTSKAKHQTKTIIIAMGGGAFKPRALELDDAESYSNLHYHVSNINQYAGKKVVVLGGGDSAVDWALAFEKIAETSLVHRRDNFRALEHSVEELKASSVEIKTPFVPSRLVGENGKITHLEISQVKGEESQLLPLDHLFVNYGFKSSVGNLKNWGLELNRHKILVNSKQETSVPGIYAAGDCCSYEGKIDLIATGLGEAPTAVNNAINHIYPDQKVQPKHSTSL.

Positions 34, 42, 47, 87, 120, 279, and 320 each coordinate FAD.

This sequence belongs to the ferredoxin--NADP reductase type 2 family. In terms of assembly, homodimer. It depends on FAD as a cofactor.

It catalyses the reaction 2 reduced [2Fe-2S]-[ferredoxin] + NADP(+) + H(+) = 2 oxidized [2Fe-2S]-[ferredoxin] + NADPH. This Streptococcus gordonii (strain Challis / ATCC 35105 / BCRC 15272 / CH1 / DL1 / V288) protein is Ferredoxin--NADP reductase.